A 438-amino-acid polypeptide reads, in one-letter code: Beta-1,3-galactosyl-O-glycosyl-glycoprotein beta-1,6-N-acetylglucosaminyltransferase 3 (438 aa).

The Cytoplasmic segment spans residues 1 to 6; sequence MVQWKR. Residues 7-26 traverse the membrane as a helical; Signal-anchor for type II membrane protein segment; the sequence is LCQLHYLWALGCYMLLATVA. Residues 27–438 are Lumenal-facing; that stretch reads LKLSFRLKCD…RYKAIYGTEL (412 aa). Disulfide bonds link C70-C227, C161-C382, C182-C209, and C391-C423. N289 is a glycosylation site (N-linked (GlcNAc...) asparagine).

This sequence belongs to the glycosyltransferase 14 family. Post-translationally, N-glycosylated. In terms of tissue distribution, primarily expressed in mucus-secreting tissues. Expressed in colon, kidney, small intestine, trachea, and stomach, where mucin is produced.

The protein resides in the golgi apparatus membrane. The catalysed reaction is a 3-O-[beta-D-galactosyl-(1-&gt;3)-N-acetyl-alpha-D-galactosaminyl]-L-seryl-[protein] + UDP-N-acetyl-alpha-D-glucosamine = 3-O-{beta-D-galactosyl-(1-&gt;3)-[N-acetyl-beta-D-glucosaminyl-(1-&gt;6)]-N-acetyl-alpha-D-galactosaminyl}-L-seryl-[protein] + UDP + H(+). It catalyses the reaction a 3-O-[beta-D-galactosyl-(1-&gt;3)-N-acetyl-alpha-D-galactosaminyl]-L-threonyl-[protein] + UDP-N-acetyl-alpha-D-glucosamine = a 3-O-{beta-D-galactosyl-(1-&gt;3)-[N-acetyl-beta-D-glucosaminyl-(1-&gt;6)]-N-acetyl-alpha-D-galactosaminyl}-L-threonyl-[protein] + UDP + H(+). It carries out the reaction a beta-D-Gal-(1-&gt;4)-beta-D-GlcNAc-(1-&gt;3)-beta-D-Gal-(1-&gt;4)-beta-D-GlcNAc derivative + UDP-N-acetyl-alpha-D-glucosamine = a beta-D-Gal-(1-&gt;4)-beta-D-GlcNAc-(1-&gt;3)-[beta-D-GlcNAc-(1-&gt;6)]-beta-D-Gal-(1-&gt;4)-N-acetyl-beta-D-glucosaminyl derivative + UDP + H(+). The enzyme catalyses 3-O-[N-acetyl-beta-D-glucosaminyl-(1-&gt;3)-N-acetyl-alpha-D-galactosaminyl]-L-seryl-[protein] + UDP-N-acetyl-alpha-D-glucosamine = 3-O-[N-acetyl-beta-D-glucosaminyl-(1-&gt;3)-[N-acetyl-beta-D-glucosaminyl-(1-&gt;6)]-N-acetyl-alpha-D-galactosaminyl]-L-seryl-[protein] + UDP + H(+). The catalysed reaction is a 3-O-[N-acetyl-beta-D-glucosaminyl-(1-&gt;3)-N-acetyl-alpha-D-galactosaminyl]-L-threonyl-[protein] + UDP-N-acetyl-alpha-D-glucosamine = 3-O-[N-acetyl-beta-D-glucosaminyl-(1-&gt;3)-[N-acetyl-beta-D-glucosaminyl-(1-&gt;6)]-N-acetyl-alpha-D-galactosaminyl]-L-threonyl-[protein] + UDP + H(+). Its pathway is protein modification; protein glycosylation. Functionally, glycosyltransferase that can synthesize all known mucin beta 6 N-acetylglucosaminides. Mediates core 2 and core 4 O-glycan branching, 2 important steps in mucin-type biosynthesis. Also has I-branching enzyme activity by converting linear into branched poly-N-acetyllactosaminoglycans, leading to introduce the blood group I antigen during embryonic development. This Homo sapiens (Human) protein is Beta-1,3-galactosyl-O-glycosyl-glycoprotein beta-1,6-N-acetylglucosaminyltransferase 3 (GCNT3).